The sequence spans 483 residues: MTQGPLTTEAGAPVADNQNSETAGVGGPVLVQDQLLLEKLAHFNRERIPERVVHARGAGAYGTFTLTRDVSRWTRAAFLSEVGKRTETFLRFSTVAGSLGAADAVRDPRGWALKFYTEEGNYDLVGNNTPVFFIKDAIKFPDFIHTQKRDPYTGSQEADNVWDFWGLSPESTHQVTWLFGDRGIPASYRHMNGYGSHTYQWNNEAGEVFWVKYHFKTDQGIKNLTQDEANRLAGEDPDSHQRDLREAIERGDFPTWTVQVQIMPAADAAGYRFNPFDLTKVWPHEDYPPVEIGTLELNRNPENIFAEVEQSIFSPAHFVPGIGPSPDKMLQGRLFAYGDAHRYRVGINADHLPVNRPHATEARTHSRDGFLYDGRHKGAKNYEPNSFGGPVQTDRPLWQPTPVTGVTGDHAAPSHAEDDDFTQAGDLYRLMSEDEKGRLIDNLSGFIAKVSRDDIAERAIGNFRRADEDFGKRLEAAVQALRG.

Residues 1 to 24 (MTQGPLTTEAGAPVADNQNSETAG) are disordered. Residues histidine 54 and asparagine 127 contribute to the active site. Tyrosine 337 lines the heme pocket.

It belongs to the catalase family.

The enzyme catalyses 2 H2O2 = O2 + 2 H2O. This is Bromoperoxidase-catalase (bca) from Streptomyces venezuelae (strain ATCC 10712 / CBS 650.69 / DSM 40230 / JCM 4526 / NBRC 13096 / PD 04745).